The following is a 131-amino-acid chain: Ribosome-binding factor A (131 aa).

The protein belongs to the RbfA family. In terms of assembly, monomer. Binds 30S ribosomal subunits, but not 50S ribosomal subunits or 70S ribosomes.

It is found in the cytoplasm. Its function is as follows. One of several proteins that assist in the late maturation steps of the functional core of the 30S ribosomal subunit. Associates with free 30S ribosomal subunits (but not with 30S subunits that are part of 70S ribosomes or polysomes). Required for efficient processing of 16S rRNA. May interact with the 5'-terminal helix region of 16S rRNA. The sequence is that of Ribosome-binding factor A from Pseudomonas fluorescens (strain SBW25).